The following is a 343-amino-acid chain: Oxygen-dependent coproporphyrinogen-III oxidase (343 aa).

Substrate is bound at residue Ser99. A divalent metal cation-binding residues include His103 and His113. The Proton donor role is filled by His113. A substrate-binding site is contributed by Asn115 to Arg117. A divalent metal cation-binding residues include His147 and His177. Residues Tyr267–Glu302 are important for dimerization.

This sequence belongs to the aerobic coproporphyrinogen-III oxidase family. In terms of assembly, homodimer. It depends on a divalent metal cation as a cofactor.

Its subcellular location is the cytoplasm. The enzyme catalyses coproporphyrinogen III + O2 + 2 H(+) = protoporphyrinogen IX + 2 CO2 + 2 H2O. The protein operates within porphyrin-containing compound metabolism; protoporphyrin-IX biosynthesis; protoporphyrinogen-IX from coproporphyrinogen-III (O2 route): step 1/1. Its function is as follows. Involved in the heme and chlorophyll biosynthesis. Catalyzes the aerobic oxidative decarboxylation of propionate groups of rings A and B of coproporphyrinogen-III to yield the vinyl groups in protoporphyrinogen-IX. The protein is Oxygen-dependent coproporphyrinogen-III oxidase of Prochlorococcus marinus (strain SARG / CCMP1375 / SS120).